A 146-amino-acid polypeptide reads, in one-letter code: 3-hydroxyacyl-[acyl-carrier-protein] dehydratase FabZ (146 aa).

Histidine 47 is an active-site residue.

It belongs to the thioester dehydratase family. FabZ subfamily.

Its subcellular location is the cytoplasm. The catalysed reaction is a (3R)-hydroxyacyl-[ACP] = a (2E)-enoyl-[ACP] + H2O. In terms of biological role, involved in unsaturated fatty acids biosynthesis. Catalyzes the dehydration of short chain beta-hydroxyacyl-ACPs and long chain saturated and unsaturated beta-hydroxyacyl-ACPs. This is 3-hydroxyacyl-[acyl-carrier-protein] dehydratase FabZ from Nitrosospira multiformis (strain ATCC 25196 / NCIMB 11849 / C 71).